Consider the following 146-residue polypeptide: Small ribosomal subunit protein uS5 (146 aa).

The S5 DRBM domain maps to 8–71 (FEESIVNIGR…DNAFKNLSKV (64 aa)).

Belongs to the universal ribosomal protein uS5 family. In terms of assembly, part of the 30S ribosomal subunit. Contacts proteins S4 and S8.

With S4 and S12 plays an important role in translational accuracy. Its function is as follows. Located at the back of the 30S subunit body where it stabilizes the conformation of the head with respect to the body. The polypeptide is Small ribosomal subunit protein uS5 (Sulfurimonas denitrificans (strain ATCC 33889 / DSM 1251) (Thiomicrospira denitrificans (strain ATCC 33889 / DSM 1251))).